The sequence spans 660 residues: Poly [ADP-ribose] polymerase 2-A (660 aa).

The region spanning 2-36 is the SAP 1 domain; the sequence is SARLRVEELRAELQRRGLDASGNKPVLVRRLDAAI. Residues 40–92 form a disordered region; that stretch reads EEEEAAVSAAAKEEADAGGVVDGEGNGEDKRKRKRRGDGEDVDNSESDAAKLE. Residues 69–75 carry the Nuclear localization signal motif; that stretch reads KRKRKRR. The SAP 2 domain maps to 91 to 125; it reads LEGMSYRELQALAKSRGLAANGSKKEVIERLLCAP. A WGR domain is found at 179 to 281; the sequence is TYHVLQVWFL…KSFECYARKY (103 aa). The 119-residue stretch at 308–426 folds into the PARP alpha-helical domain; the sequence is ETKLETRIAS…EIEIATKLLE (119 aa). The PARP catalytic domain maps to 434–660; that stretch reads DPLYARYKQL…LHVSFNFKKR (227 aa).

The protein belongs to the ARTD/PARP family.

It is found in the nucleus. It carries out the reaction NAD(+) + (ADP-D-ribosyl)n-acceptor = nicotinamide + (ADP-D-ribosyl)n+1-acceptor + H(+).. The catalysed reaction is L-aspartyl-[protein] + NAD(+) = 4-O-(ADP-D-ribosyl)-L-aspartyl-[protein] + nicotinamide. The enzyme catalyses L-glutamyl-[protein] + NAD(+) = 5-O-(ADP-D-ribosyl)-L-glutamyl-[protein] + nicotinamide. In terms of biological role, involved in the base excision repair (BER) pathway, by catalyzing the poly(ADP-ribosyl)ation of a limited number of acceptor proteins involved in chromatin architecture and in DNA metabolism. This modification follows DNA damages and appears as an obligatory step in a detection/signaling pathway leading to the reparation of DNA strand breaks. The sequence is that of Poly [ADP-ribose] polymerase 2-A (PARP2-A) from Oryza sativa subsp. japonica (Rice).